A 185-amino-acid polypeptide reads, in one-letter code: Ribonuclease M5 (185 aa).

The region spanning 4 to 87 is the Toprim domain; that stretch reads KEIIVVEGKD…AFLPKEEALA (84 aa). 3 residues coordinate Mg(2+): Glu-10, Asp-56, and Asp-58.

This sequence belongs to the ribonuclease M5 family. Requires Mg(2+) as cofactor.

It localises to the cytoplasm. It catalyses the reaction Endonucleolytic cleavage of RNA, removing 21 and 42 nucleotides, respectively, from the 5'- and 3'-termini of a 5S-rRNA precursor.. Its function is as follows. Required for correct processing of both the 5' and 3' ends of 5S rRNA precursor. Cleaves both sides of a double-stranded region yielding mature 5S rRNA in one step. The polypeptide is Ribonuclease M5 (Bacillus anthracis).